Consider the following 367-residue polypeptide: DNA replication and repair protein RecF (367 aa).

ATP is bound at residue 30–37 (GANGSGKT).

Belongs to the RecF family.

The protein localises to the cytoplasm. Functionally, the RecF protein is involved in DNA metabolism; it is required for DNA replication and normal SOS inducibility. RecF binds preferentially to single-stranded, linear DNA. It also seems to bind ATP. The sequence is that of DNA replication and repair protein RecF from Pseudomonas fluorescens (strain Pf0-1).